Here is a 430-residue protein sequence, read N- to C-terminus: Aspartate--tRNA(Asp/Asn) ligase (430 aa).

Glu168 serves as a coordination point for L-aspartate. An aspartate region spans residues 190–193; the sequence is QLYK. L-aspartate is bound at residue Arg212. ATP-binding positions include 212-214, 220-222, and Glu353; these read RAE and RHL. Positions 353 and 356 each coordinate Mg(2+). 2 residues coordinate L-aspartate: Ser356 and Arg360. Position 401 to 404 (401 to 404) interacts with ATP; sequence GAER.

It belongs to the class-II aminoacyl-tRNA synthetase family. Type 2 subfamily. In terms of assembly, homodimer. Mg(2+) is required as a cofactor.

It localises to the cytoplasm. The catalysed reaction is tRNA(Asx) + L-aspartate + ATP = L-aspartyl-tRNA(Asx) + AMP + diphosphate. Aspartyl-tRNA synthetase with relaxed tRNA specificity since it is able to aspartylate not only its cognate tRNA(Asp) but also tRNA(Asn). Reaction proceeds in two steps: L-aspartate is first activated by ATP to form Asp-AMP and then transferred to the acceptor end of tRNA(Asp/Asn). This chain is Aspartate--tRNA(Asp/Asn) ligase, found in Archaeoglobus fulgidus (strain ATCC 49558 / DSM 4304 / JCM 9628 / NBRC 100126 / VC-16).